The chain runs to 623 residues: Isocitrate dehydrogenase kinase/phosphatase (623 aa).

ATP-binding positions include 344-350 (APGIKGM) and Lys-365. The active site involves Asp-400.

It belongs to the AceK family.

Its subcellular location is the cytoplasm. The enzyme catalyses L-seryl-[isocitrate dehydrogenase] + ATP = O-phospho-L-seryl-[isocitrate dehydrogenase] + ADP + H(+). Its function is as follows. Bifunctional enzyme which can phosphorylate or dephosphorylate isocitrate dehydrogenase (IDH) on a specific serine residue. This is a regulatory mechanism which enables bacteria to bypass the Krebs cycle via the glyoxylate shunt in response to the source of carbon. When bacteria are grown on glucose, IDH is fully active and unphosphorylated, but when grown on acetate or ethanol, the activity of IDH declines drastically concomitant with its phosphorylation. The protein is Isocitrate dehydrogenase kinase/phosphatase of Polaromonas naphthalenivorans (strain CJ2).